The sequence spans 294 residues: uncharacterized protein (294 aa).

2 disordered regions span residues 1-148 (MFLR…LEKP) and 268-294 (DEAA…GKGL). Phosphoserine is present on residues serine 34 and serine 35. A compositionally biased stretch (low complexity) spans 35–44 (SSENSGSDWD). The span at 52-62 (DVGHPKTKDSG) shows a compositional bias: basic and acidic residues. A phosphoserine mark is found at serine 71 and serine 90. 2 stretches are compositionally biased toward basic and acidic residues: residues 73–92 (PSKE…DSLK) and 278–294 (GLER…GKGL).

This is an uncharacterized protein from Homo sapiens (Human).